The chain runs to 335 residues: MKNELEKVMSGRDMTENEMNMLANSIIQGELSEVQIASFLVALKMKGEAASELTGLARALQKAAIPIPTNLTNAMDNCGTGGDRSFSFNISTTAAFVLAAGGVNMAKHGNRSITSKSGSADVLEALGINLYLPAEKLAQVFDKVGLVFLFAQNLHPAMKYFTPVRRQLEIPTIMNLTGPLINPIPLDTQLLGTSRPDLLELTANVLKGLGRKRALVITGEGGMDEATPFGLNHYALLENDKVTLHEFRASEVGISEVQLNDIRGGEAPENAEILKNVLENQPSAFLETTVLNAGLGFYANGKVDSIKSGVDLAREVISTGAALTKLHELQAEQIG.

5-phospho-alpha-D-ribose 1-diphosphate-binding positions include Gly-79, Gly-82–Asp-83, Ser-87, Asn-89–Thr-92, Lys-107–Ser-115, and Ser-119. Gly-79 is a binding site for anthranilate. Mg(2+) is bound at residue Ser-91. Asn-110 serves as a coordination point for anthranilate. Arg-165 contributes to the anthranilate binding site. Positions 224 and 225 each coordinate Mg(2+).

This sequence belongs to the anthranilate phosphoribosyltransferase family. As to quaternary structure, homodimer. It depends on Mg(2+) as a cofactor.

The enzyme catalyses N-(5-phospho-beta-D-ribosyl)anthranilate + diphosphate = 5-phospho-alpha-D-ribose 1-diphosphate + anthranilate. Its pathway is amino-acid biosynthesis; L-tryptophan biosynthesis; L-tryptophan from chorismate: step 2/5. Its function is as follows. Catalyzes the transfer of the phosphoribosyl group of 5-phosphorylribose-1-pyrophosphate (PRPP) to anthranilate to yield N-(5'-phosphoribosyl)-anthranilate (PRA). In Lactococcus lactis subsp. lactis (strain IL1403) (Streptococcus lactis), this protein is Anthranilate phosphoribosyltransferase.